The sequence spans 347 residues: S-adenosylmethionine:tRNA ribosyltransferase-isomerase (347 aa).

This sequence belongs to the QueA family. As to quaternary structure, monomer.

It is found in the cytoplasm. The enzyme catalyses 7-aminomethyl-7-carbaguanosine(34) in tRNA + S-adenosyl-L-methionine = epoxyqueuosine(34) in tRNA + adenine + L-methionine + 2 H(+). It functions in the pathway tRNA modification; tRNA-queuosine biosynthesis. In terms of biological role, transfers and isomerizes the ribose moiety from AdoMet to the 7-aminomethyl group of 7-deazaguanine (preQ1-tRNA) to give epoxyqueuosine (oQ-tRNA). This chain is S-adenosylmethionine:tRNA ribosyltransferase-isomerase, found in Gluconobacter oxydans (strain 621H) (Gluconobacter suboxydans).